A 367-amino-acid chain; its full sequence is Phosphoribosylaminoimidazole-succinocarboxamide synthase (367 aa).

Belongs to the SAICAR synthetase family.

The enzyme catalyses 5-amino-1-(5-phospho-D-ribosyl)imidazole-4-carboxylate + L-aspartate + ATP = (2S)-2-[5-amino-1-(5-phospho-beta-D-ribosyl)imidazole-4-carboxamido]succinate + ADP + phosphate + 2 H(+). It participates in purine metabolism; IMP biosynthesis via de novo pathway; 5-amino-1-(5-phospho-D-ribosyl)imidazole-4-carboxamide from 5-amino-1-(5-phospho-D-ribosyl)imidazole-4-carboxylate: step 1/2. This is Phosphoribosylaminoimidazole-succinocarboxamide synthase from Shewanella sp. (strain MR-7).